The following is a 107-amino-acid chain: MSSHPTKITFFEFLTPLITSGQKTITIRDESESHYVPNTEVEVFTLETDRKVCDIKILSVEPLNFDEINEFHAEQEAIELPKLKQLIREIYPNIDKLFVIEYELIKK.

Residues 9–105 form the ASCH domain; that stretch reads TFFEFLTPLI…KLFVIEYELI (97 aa). Residue K23 is the Proton acceptor of the active site. The active-site Nucleophile is the T26. The Proton donor role is filled by E76.

This sequence belongs to the N(4)-acetylcytidine amidohydrolase family.

It catalyses the reaction N(4)-acetylcytidine + H2O = cytidine + acetate + H(+). It carries out the reaction N(4)-acetyl-2'-deoxycytidine + H2O = 2'-deoxycytidine + acetate + H(+). The enzyme catalyses N(4)-acetylcytosine + H2O = cytosine + acetate + H(+). Its function is as follows. Catalyzes the hydrolysis of N(4)-acetylcytidine (ac4C). This Vibrio parahaemolyticus serotype O3:K6 (strain RIMD 2210633) protein is N(4)-acetylcytidine amidohydrolase.